The sequence spans 759 residues: Xaa-Pro dipeptidyl-peptidase (759 aa).

Active-site charge relay system residues include serine 347, aspartate 467, and histidine 497.

It belongs to the peptidase S15 family. In terms of assembly, homodimer.

The protein resides in the cytoplasm. The catalysed reaction is Hydrolyzes Xaa-Pro-|- bonds to release unblocked, N-terminal dipeptides from substrates including Ala-Pro-|-p-nitroanilide and (sequentially) Tyr-Pro-|-Phe-Pro-|-Gly-Pro-|-Ile.. Removes N-terminal dipeptides sequentially from polypeptides having unsubstituted N-termini provided that the penultimate residue is proline. The protein is Xaa-Pro dipeptidyl-peptidase of Streptococcus gordonii (strain Challis / ATCC 35105 / BCRC 15272 / CH1 / DL1 / V288).